Here is a 352-residue protein sequence, read N- to C-terminus: MNFIHDPLTPRVLFGAGRLQSLGEELKLLGIRRVLVISTPEQRELANQVAALIPGSVAGFFDRATMHVPSQIVDQAASVARELGVDSYVAPGGGSTIGLAKMLALHSSLPIVAIPTTYAGSEMTSIYGVTENELKKTGRDRRVLARTVIYDPELTFGLPTGISVTSGLNAIAHAVEGLYAPEVNPILAIMAQQGIAALAKSIPTIRSAPTDLEARSQAQYGAWLCGSVLGNVSMALHHKLCHTLGGTFNLPHAETHTVVLPHALAYNTPAIPRANAWLQEALATREPAQALFDLAKSNGAPVSLQSIGMKEADLDRACELVMSAQYPNPRPLEKHAIANLLRRAYLGEPPQP.

This sequence belongs to the iron-containing alcohol dehydrogenase family.

The enzyme catalyses 3-oxoadipate + NAD(+) = maleylacetate + NADH + H(+). It catalyses the reaction 3-oxoadipate + NADP(+) = maleylacetate + NADPH + H(+). The protein operates within aromatic compound metabolism; 3-chlorocatechol degradation. This chain is Maleylacetate reductase (tcbF), found in Pseudomonas sp. (strain P51).